A 465-amino-acid chain; its full sequence is Crh-like protein ARB_05253 (465 aa).

The signal sequence occupies residues 1 to 21; that stretch reads MKLSLAAALLGALAVSAQTST. A GH16 domain is found at 22-223; sequence ECNPLKQKCP…WAGGETDFSK (202 aa). Cysteines 23 and 30 form a disulfide. Glu114 acts as the Nucleophile in catalysis. Residue Glu118 is the Proton donor of the active site. The chitin site is built by Glu118, Trp200, and Thr211. 2 disordered regions span residues 261-325 and 339-442; these read GQVN…STMT and TGTG…PGST. Asn264 carries an N-linked (GlcNAc...) asparagine glycan. Over residues 277–287 the composition is skewed to low complexity; it reads SSTLPSSPSTS. Positions 304–325 are enriched in polar residues; the sequence is QAPNTGSSPSNTLTNGPSSTMT. Low complexity-rich tracts occupy residues 339 to 348, 361 to 376, and 383 to 397; these read TGTGGVVTPT, TSRS…SASS, and MTTS…TGTG. The GPI-anchor amidated serine moiety is linked to residue Ser441. A propeptide spans 442–465 (removed in mature form); the sequence is TGAIHSVSNALLLSFCAIAAWALV.

This sequence belongs to the glycosyl hydrolase 16 family. CRH1 subfamily. In terms of processing, the GPI-anchor is attached to the protein in the endoplasmic reticulum and serves to target the protein to the cell surface. There, the glucosamine-inositol phospholipid moiety is cleaved off and the GPI-modified mannoprotein is covalently attached via its lipidless GPI glycan remnant to the 1,6-beta-glucan of the outer cell wall layer.

The protein resides in the secreted. It localises to the cell wall. Its subcellular location is the membrane. It carries out the reaction Random endo-hydrolysis of N-acetyl-beta-D-glucosaminide (1-&gt;4)-beta-linkages in chitin and chitodextrins.. Functionally, dual chitinase/transglycosylase that plays a role in cell wall architecture. Chitinase and transglycosylase activities are coupled. Required for the polysaccharide cross-linking at the septa and the cell wall. More specifically, transfers chitin to 1,6-beta-glucan in the cell wall. The polypeptide is Crh-like protein ARB_05253 (Arthroderma benhamiae (strain ATCC MYA-4681 / CBS 112371) (Trichophyton mentagrophytes)).